Reading from the N-terminus, the 663-residue chain is Syntabulin (663 aa).

2 disordered regions span residues 1-202 (MGPL…PREK) and 216-267 (VNIH…PEQY). Residues 2–417 (GPLRESKKEH…DTMADGLSLE (416 aa)) are sufficient for interaction with KIF5B. Serine 50 carries the post-translational modification Phosphoserine. Over residues 57 to 73 (FNPSSSGRSARTVSSNS) the composition is skewed to low complexity. A compositionally biased stretch (polar residues) spans 81 to 97 (CPSSQSVSPVKTPSDAG). A Phosphoserine modification is found at serine 107. 3 stretches are compositionally biased toward low complexity: residues 145-158 (EADF…GSIS), 188-198 (SSHKPGSSPSS), and 221-241 (SYAP…SDCS). A coiled-coil region spans residues 271-353 (LQQKEVTVRH…MRSSLADKDK (83 aa)). The interval 310-417 (REDWIEEECH…DTMADGLSLE (108 aa)) is sufficient for interaction with STX1A. 2 positions are modified to phosphoserine: serine 396 and serine 555. A helical membrane pass occupies residues 606–626 (SFLVDLLAVAAPVVPTVLWAF).

In terms of assembly, interacts with STX1A and KIF5B. As to expression, isoform 3, isoform 4 and isoform 5 are expressed in HeLa cell line (at protein level). Isoform 3 is expressed in fetal and adult brain. Isoform 4 is expressed in numerous fetal tissues (brain, kidney, liver, lung, and thymus) and in adult brain, kidney, liver, lung, pancreas, colon, prostate, small intestine, testis and thymus. Isoform 5 is expressed in fetal brain, brain and small intestine.

The protein resides in the cytoplasm. It is found in the cytoskeleton. It localises to the cytoplasmic vesicle. The protein localises to the golgi apparatus membrane. In terms of biological role, part of a kinesin motor-adapter complex that is critical for the anterograde axonal transport of active zone components and contributes to activity-dependent presynaptic assembly during neuronal development. This Homo sapiens (Human) protein is Syntabulin (SYBU).